The sequence spans 248 residues: 2,3-bisphosphoglycerate-dependent phosphoglycerate mutase (248 aa).

Substrate contacts are provided by residues 8-15 (RHGESEWN), 21-22 (TG), Arg-60, 87-90 (ERHY), Lys-98, 114-115 (RR), and 183-184 (GN). His-9 serves as the catalytic Tele-phosphohistidine intermediate. Glu-87 (proton donor/acceptor) is an active-site residue.

This sequence belongs to the phosphoglycerate mutase family. BPG-dependent PGAM subfamily.

It catalyses the reaction (2R)-2-phosphoglycerate = (2R)-3-phosphoglycerate. It participates in carbohydrate degradation; glycolysis; pyruvate from D-glyceraldehyde 3-phosphate: step 3/5. In terms of biological role, catalyzes the interconversion of 2-phosphoglycerate and 3-phosphoglycerate. The chain is 2,3-bisphosphoglycerate-dependent phosphoglycerate mutase from Borrelia garinii subsp. bavariensis (strain ATCC BAA-2496 / DSM 23469 / PBi) (Borreliella bavariensis).